We begin with the raw amino-acid sequence, 646 residues long: DEAD-box ATP-dependent RNA helicase 52 (646 aa).

2 disordered regions span residues 1–64 (MSSN…ANSG) and 76–117 (GSGY…PAVN). Ser-2 bears the N-acetylserine mark. Composition is skewed to gly residues over residues 54-64 (DRGGYGGANSG) and 76-87 (GSGYGGRGGPVG). The Q motif motif lies at 146 to 174 (NTFAEIDLGEALNLNIQRCKYVKPTPVQR). The Helicase ATP-binding domain occupies 177-361 (IPILAAGRDL…SDFLSNYIFL (185 aa)). Position 190-197 (190-197 (AQTGSGKT)) interacts with ATP. The short motif at 305–308 (DEAD) is the DEAD box element. The Helicase C-terminal domain maps to 388–539 (HLMDLLHAQR…EVPDWLTRYA (152 aa)).

This sequence belongs to the DEAD box helicase family. DDX3/DED1 subfamily.

It catalyses the reaction ATP + H2O = ADP + phosphate + H(+). The chain is DEAD-box ATP-dependent RNA helicase 52 (RH52) from Arabidopsis thaliana (Mouse-ear cress).